The sequence spans 203 residues: Small ribosomal subunit protein uS4 (203 aa).

In terms of domain architecture, S4 RNA-binding spans 93 to 156 (TRLDNLVFRL…QNLAIVNEAI (64 aa)).

This sequence belongs to the universal ribosomal protein uS4 family. As to quaternary structure, part of the 30S ribosomal subunit. Contacts protein S5. The interaction surface between S4 and S5 is involved in control of translational fidelity.

Its function is as follows. One of the primary rRNA binding proteins, it binds directly to 16S rRNA where it nucleates assembly of the body of the 30S subunit. With S5 and S12 plays an important role in translational accuracy. The sequence is that of Small ribosomal subunit protein uS4 from Lacticaseibacillus casei (strain BL23) (Lactobacillus casei).